Reading from the N-terminus, the 226-residue chain is MEPVKNLARLSRTLGYEFTNQELLVQALTHRSAANKHNERLEFLGDSILSIVISDALYHQFPKATEGDLSRMRATLVKGETLTLIAKEFKLGDYLFLGPGELKSGGFRRESILADAVEAIIGAVYLDANMQACETLLLSWYKVRLDEIKPGINQKDPKTILQEYLQGYKKPLPDYQVVQVDGEAHDQTFTVECRIQDLDEVVTGVGSSRRKAEQLAAAQILELINK.

One can recognise an RNase III domain in the interval 7–129 (LARLSRTLGY…IIGAVYLDAN (123 aa)). Mg(2+) is bound at residue Glu42. The active site involves Asp46. The Mg(2+) site is built by Asp115 and Glu118. Glu118 is an active-site residue. The DRBM domain maps to 156-226 (DPKTILQEYL…AAQILELINK (71 aa)).

Belongs to the ribonuclease III family. Homodimer. Mg(2+) is required as a cofactor.

It localises to the cytoplasm. The catalysed reaction is Endonucleolytic cleavage to 5'-phosphomonoester.. In terms of biological role, digests double-stranded RNA. Involved in the processing of primary rRNA transcript to yield the immediate precursors to the large and small rRNAs (23S and 16S). Processes some mRNAs, and tRNAs when they are encoded in the rRNA operon. Processes pre-crRNA and tracrRNA of type II CRISPR loci if present in the organism. In Shewanella denitrificans (strain OS217 / ATCC BAA-1090 / DSM 15013), this protein is Ribonuclease 3.